Consider the following 427-residue polypeptide: G2/mitotic-specific cyclin-B1 (427 aa).

The tract at residues 33 to 126 (ATSKPGLRPR…DTPSPSPMET (94 aa)) is disordered. Residue K73 is modified to N6-acetyllysine. Residues 100 to 110 (EPEHVKEDKLS) show a composition bias toward basic and acidic residues. Position 120 is a phosphoserine; by CDK1 (S120). S122 carries the phosphoserine modification. S127 carries the phosphoserine; by PLK1 modification. The residue at position 141 (S141) is a Phosphoserine. Interaction with CDK2 regions lie at residues 163–171 (EYVKDIYAY) and 252–255 (YEEM). T315 bears the Phosphothreonine mark.

It belongs to the cyclin family. Cyclin AB subfamily. In terms of assembly, interacts with the CDC2 protein kinase to form a serine/threonine kinase holoenzyme complex also known as maturation promoting factor (MPF). The cyclin subunit imparts substrate specificity to the complex. Binds HEI10. Interacts with catalytically active RALBP1 and CDC2 during mitosis to form an endocytotic complex during interphase. Interacts with CCNF; interaction is required for nuclear localization. Interacts with CDK5RAP3. Interacts with RFPL4A and UBE2A. Interacts with INCA1. In terms of processing, ubiquitinated by the SCF(NIPA) complex during interphase, leading to its destruction. Deubiquitinated by USP22 during G2/M phase. Phosphorylated by PLK1 at Ser-127 on centrosomes during prophase: phosphorylation by PLK1 does not cause nuclear import. Phosphorylation at Ser-141 was also reported to be mediated by PLK1 but Ser-127 seems to be the primary phosphorylation site.

Its subcellular location is the cytoplasm. It localises to the nucleus. The protein localises to the cytoskeleton. The protein resides in the microtubule organizing center. It is found in the centrosome. Its function is as follows. Essential for the control of the cell cycle at the G2/M (mitosis) transition. The chain is G2/mitotic-specific cyclin-B1 (CCNB1) from Bos taurus (Bovine).